Reading from the N-terminus, the 448-residue chain is Probable D-serine dehydratase (448 aa).

The residue at position 119 (lysine 119) is an N6-(pyridoxal phosphate)lysine.

The protein belongs to the serine/threonine dehydratase family. DsdA subfamily. Pyridoxal 5'-phosphate serves as cofactor.

The enzyme catalyses D-serine = pyruvate + NH4(+). This Chromobacterium violaceum (strain ATCC 12472 / DSM 30191 / JCM 1249 / CCUG 213 / NBRC 12614 / NCIMB 9131 / NCTC 9757 / MK) protein is Probable D-serine dehydratase.